We begin with the raw amino-acid sequence, 444 residues long: Phosphoribosylamine--glycine ligase (444 aa).

Residues 109 to 324 (RNLFKKYEID…FLDVCFAIAE (216 aa)) enclose the ATP-grasp domain. ATP is bound at residue 140-202 (MTSLGKDVVV…EEKLVGVEFT (63 aa)). The Mg(2+) site is built by Gln282, Glu294, and Asn296. 3 residues coordinate Mn(2+): Gln282, Glu294, and Asn296.

Belongs to the GARS family. Mg(2+) serves as cofactor. The cofactor is Mn(2+).

The catalysed reaction is 5-phospho-beta-D-ribosylamine + glycine + ATP = N(1)-(5-phospho-beta-D-ribosyl)glycinamide + ADP + phosphate + H(+). Its pathway is purine metabolism; IMP biosynthesis via de novo pathway; N(1)-(5-phospho-D-ribosyl)glycinamide from 5-phospho-alpha-D-ribose 1-diphosphate: step 2/2. In Methanococcus maripaludis (strain C7 / ATCC BAA-1331), this protein is Phosphoribosylamine--glycine ligase.